Reading from the N-terminus, the 1048-residue chain is Putative helicase/primase complex protein (1048 aa).

Positions 1025-1048 are disordered; that stretch reads STKEESSPTREETSSIKEKTFTET.

The protein belongs to the asfivirus F1055L family.

Its function is as follows. May be involved in DNA replication. The chain is Putative helicase/primase complex protein from African swine fever virus (isolate Pig/Kenya/KEN-50/1950) (ASFV).